The following is a 127-amino-acid chain: Small ribosomal subunit protein uS11 (127 aa).

Belongs to the universal ribosomal protein uS11 family. Part of the 30S ribosomal subunit. Interacts with proteins S7 and S18. Binds to IF-3.

In terms of biological role, located on the platform of the 30S subunit, it bridges several disparate RNA helices of the 16S rRNA. Forms part of the Shine-Dalgarno cleft in the 70S ribosome. The protein is Small ribosomal subunit protein uS11 of Streptococcus gordonii (strain Challis / ATCC 35105 / BCRC 15272 / CH1 / DL1 / V288).